The following is a 353-amino-acid chain: UPF0283 membrane protein Spro_2618 (353 aa).

The next 3 membrane-spanning stretches (helical) occupy residues 71–91, 101–121, and 214–234; these read MVTA…VQWV, IAMG…GSVV, and ESTL…FIAW.

It belongs to the UPF0283 family.

The protein localises to the cell inner membrane. This chain is UPF0283 membrane protein Spro_2618, found in Serratia proteamaculans (strain 568).